Consider the following 540-residue polypeptide: Keratin, type II cytoskeletal 73 (540 aa).

Residues 1–131 (MSRQFTYKSG…DPEIQKVCAQ (131 aa)) are head. Residues 132 to 167 (EREQIKALNNKFASFIDKVRFLEQQNQVLGTKWELL) are coil 1A. The IF rod domain maps to 132-445 (EREQIKALNN…KLLEGEECRM (314 aa)). The segment at 168 to 186 (QQQDLDNCKNNLEPILEGY) is linker 1. Residues 187–278 (ISNLRKQLEM…CLYEGEIAQM (92 aa)) form a coil 1B region. A linker 12 region spans residues 279–302 (QSHISDTSVILSMDNNRNLDLNSI). Positions 303–441 (IAEVRAQYED…ATYRKLLEGE (139 aa)) are coil 2. Positions 442–540 (ECRMSGEYTN…LSSPTKKTPR (99 aa)) are tail. The disordered stretch occupies residues 509–540 (GEAKTRLGSTSEIKDLLGKTPALSSPTKKTPR). Over residues 530–540 (ALSSPTKKTPR) the composition is skewed to polar residues.

The protein belongs to the intermediate filament family. As to quaternary structure, heterotetramer of two type I and two type II keratins.

In terms of biological role, has a role in hair formation. Specific component of keratin intermediate filaments in the inner root sheath (IRS) of the hair follicle. The chain is Keratin, type II cytoskeletal 73 (KRT73) from Bos taurus (Bovine).